Reading from the N-terminus, the 89-residue chain is Small ribosomal subunit protein uS15c (89 aa).

Belongs to the universal ribosomal protein uS15 family. Part of the 30S ribosomal subunit.

The protein localises to the plastid. It localises to the chloroplast. The polypeptide is Small ribosomal subunit protein uS15c (rps15) (Chloranthus spicatus (Chulantree)).